The chain runs to 119 residues: Large ribosomal subunit protein uL18 (119 aa).

This sequence belongs to the universal ribosomal protein uL18 family. In terms of assembly, part of the 50S ribosomal subunit; part of the 5S rRNA/L5/L18/L25 subcomplex. Contacts the 5S and 23S rRNAs.

In terms of biological role, this is one of the proteins that bind and probably mediate the attachment of the 5S RNA into the large ribosomal subunit, where it forms part of the central protuberance. In Staphylococcus aureus (strain bovine RF122 / ET3-1), this protein is Large ribosomal subunit protein uL18.